We begin with the raw amino-acid sequence, 106 residues long: Large ribosomal subunit protein uL24 (106 aa).

Belongs to the universal ribosomal protein uL24 family. As to quaternary structure, part of the 50S ribosomal subunit.

In terms of biological role, one of two assembly initiator proteins, it binds directly to the 5'-end of the 23S rRNA, where it nucleates assembly of the 50S subunit. Its function is as follows. One of the proteins that surrounds the polypeptide exit tunnel on the outside of the subunit. This chain is Large ribosomal subunit protein uL24, found in Clostridium tetani (strain Massachusetts / E88).